A 377-amino-acid polypeptide reads, in one-letter code: MASSEQAEQPSQPSSSPGSENVVPREPLIATAVKFLQNSRVRQSPLATRRAFLKKKGLTDDEIDLAFQQSGTATEEPPSLGLATPVAPVQTPHLIAQPCSPGSSRWRDYGALAIIMAGIAFGFHQLYKKYLLPLILGGREDRKQLERMASSLSELSGSVAQTVTQVQTTLASVQELLRQQQQKVQELAHELAAAKATTSTNWILESQNINELKSEINSLKGLLLNRRQFPPSPSAPKIPSWQIPVKSPSPSSPAAVNHHSSSDISPVSNESTSSSPGKESHSPEGSTATYHLLGPQEEGEGVVDVKGQVRMEVQGEEEKREDKEEEEEEEEEDVSHVDEEDVLGVQREDRRGGDGQINEQVDKLRRPEGASNESERH.

Over residues 1 to 20 (MASSEQAEQPSQPSSSPGSE) the composition is skewed to low complexity. The interval 1–23 (MASSEQAEQPSQPSSSPGSENVV) is disordered. Ala2 is modified (N-acetylalanine). Over 2–108 (ASSEQAEQPS…CSPGSSRWRD (107 aa)) the chain is Peroxisomal. The residue at position 34 (Lys34) is an N6-acetyllysine. Residues 109-126 (YGALAIIMAGIAFGFHQL) form a helical membrane-spanning segment. Over 127 to 377 (YKKYLLPLIL…EGASNESERH (251 aa)) the chain is Cytoplasmic. The tract at residues 230-377 (PPSPSAPKIP…EGASNESERH (148 aa)) is disordered. Ser232 is subject to Phosphoserine. Composition is skewed to low complexity over residues 244-259 (PVKS…VNHH) and 265-275 (SPVSNESTSSS). Ser282 and Ser335 each carry phosphoserine. A compositionally biased stretch (acidic residues) spans 323 to 342 (KEEEEEEEEEDVSHVDEEDV). The span at 360–377 (QVDKLRRPEGASNESERH) shows a compositional bias: basic and acidic residues.

The protein belongs to the peroxin-14 family. In terms of assembly, interacts with PEX13; forming the PEX13-PEX14 docking complex. Interacts with PEX5 (via WxxxF/Y motifs). Interacts with PEX19. Interacts with tubulin.

It is found in the peroxisome membrane. Functionally, component of the PEX13-PEX14 docking complex, a translocon channel that specifically mediates the import of peroxisomal cargo proteins bound to PEX5 receptor. The PEX13-PEX14 docking complex forms a large import pore which can be opened to a diameter of about 9 nm. Mechanistically, PEX5 receptor along with cargo proteins associates with the PEX14 subunit of the PEX13-PEX14 docking complex in the cytosol, leading to the insertion of the receptor into the organelle membrane with the concomitant translocation of the cargo into the peroxisome matrix. Plays a key role for peroxisome movement through a direct interaction with tubulin. This Cricetulus longicaudatus (Long-tailed dwarf hamster) protein is Peroxisomal membrane protein PEX14.